A 152-amino-acid chain; its full sequence is Nucleoside diphosphate kinase B (152 aa).

The interaction with AKAP13 stretch occupies residues 1–66 (MAHQERTFIA…DRPFYPGLVK (66 aa)). 6 residues coordinate ATP: K12, F60, R88, T94, R105, and N115. H118 acts as the Pros-phosphohistidine intermediate in catalysis.

It belongs to the NDK family. In terms of assembly, hexamer of two different chains: An and B (A6, A5B, A4B2, A3B3, A2B4, AB5, B6). Interacts with CAPN8. Interacts with AKAP13. Interacts with ITGB1BP1 (via C-terminal domain region). Interacts with BCL2L10. Requires Mg(2+) as cofactor. Ubiquitous.

It is found in the cytoplasm. The protein resides in the cell projection. It localises to the lamellipodium. Its subcellular location is the ruffle. The protein localises to the nucleus. It catalyses the reaction a 2'-deoxyribonucleoside 5'-diphosphate + ATP = a 2'-deoxyribonucleoside 5'-triphosphate + ADP. It carries out the reaction a ribonucleoside 5'-diphosphate + ATP = a ribonucleoside 5'-triphosphate + ADP. The catalysed reaction is ATP + protein L-histidine = ADP + protein N-phospho-L-histidine.. Major role in the synthesis of nucleoside triphosphates other than ATP. The ATP gamma phosphate is transferred to the NDP beta phosphate via a ping-pong mechanism, using a phosphorylated active-site intermediate. Negatively regulates Rho activity by interacting with AKAP13/LBC. Acts as a transcriptional activator of the MYC gene; binds DNA non-specifically. Binds to both single-stranded guanine- and cytosine-rich strands within the nuclease hypersensitive element (NHE) III(1) region of the MYC gene promoter. Does not bind to duplex NHE III(1). Has G-quadruplex (G4) DNA-binding activity, which is independent of its nucleotide-binding and kinase activity. Binds both folded and unfolded G4 with similar low nanomolar affinities. Stabilizes folded G4s regardless of whether they are prefolded or not. Exhibits histidine protein kinase activity. In Canis lupus familiaris (Dog), this protein is Nucleoside diphosphate kinase B (NME2).